A 353-amino-acid chain; its full sequence is G-protein coupled estrogen receptor 1 (353 aa).

Over 1 to 40 (MEEQTTNVIQIYVNGTEQFNASFDFNITDVKESTDTYEFY) the chain is Extracellular. A helical membrane pass occupies residues 41-61 (IIGLFLSCLYTIFLFPIGFIG). The Cytoplasmic portion of the chain corresponds to 62-81 (NILILVVNLNHRERMTIPDL). The chain crosses the membrane as a helical span at residues 82–102 (YFVNLAVADLILVADSLIEVF). The Extracellular segment spans residues 103–112 (NLNEKYYDYA). Residues 113–133 (VLCTFMSLFLQVNMYSSIFFL) traverse the membrane as a helical segment. Residues cysteine 115 and cysteine 192 are joined by a disulfide bond. Topologically, residues 134–160 (TWMSFDRYVALTSSMSSSPLRTMQHAK) are cytoplasmic. Residues 161–181 (LSCSLIWMASILATLLPFTIV) form a helical membrane-spanning segment. Residues 182–202 (QTQHTGEVHFCFANVFEIQWL) are Extracellular-facing. A helical transmembrane segment spans residues 203–223 (EVTIGFLIPFSIIGLCYSLIV). The Cytoplasmic segment spans residues 224–245 (RTLMRAQKHKGLWPRRQKALRM). The chain crosses the membrane as a helical span at residues 246-266 (IVVVVLVFFICWLPENVFISI). The Extracellular segment spans residues 267-292 (QLLQGTADPSKRTDTTLWHDYPLTGH). A helical membrane pass occupies residues 293–313 (IVNLAAFSNSCLNPIIYSFLG). The Cytoplasmic portion of the chain corresponds to 314 to 353 (ETFRDKLRLFIKRKASWSVVYRFCNHTLDLQIPVRSESEV).

It belongs to the G-protein coupled receptor 1 family. Homodimer. Heterodimer. As to expression, expressed in brain regions that are known to control reproduction and sex behavior. Expressed in ovary, muscle and intestine. Expressed in early germ cells of the testis, including the spermatogonia, spermatocytes, and somatic cells such as Sertoli cells.

It is found in the nucleus. It localises to the cytoplasm. The protein resides in the perinuclear region. Its subcellular location is the cytoskeleton. The protein localises to the cytoplasmic vesicle membrane. It is found in the cell membrane. It localises to the basolateral cell membrane. The protein resides in the endoplasmic reticulum membrane. Its subcellular location is the early endosome. The protein localises to the recycling endosome. It is found in the golgi apparatus. It localises to the trans-Golgi network. The protein resides in the golgi apparatus membrane. Its subcellular location is the cell projection. The protein localises to the dendrite. It is found in the dendritic spine membrane. It localises to the axon. The protein resides in the postsynaptic density. Its subcellular location is the mitochondrion membrane. Membrane G-protein coupled estrogen receptor that binds to 17-beta-estradiol (E2) with high affinity, leading to rapid and transient activation of numerous intracellular signaling pathways. Plays a role in the embryonic development of sensory and motor neurons. Specifically induces apoptosis and reduces proliferation of brain cells. Involved in maintenance of meiotic arrest in oocytes. The protein is G-protein coupled estrogen receptor 1 (gper1) of Danio rerio (Zebrafish).